The following is a 193-amino-acid chain: dITP/XTP pyrophosphatase (193 aa).

7-12 contributes to the substrate binding site; sequence SENENK. Asp65 functions as the Proton acceptor in the catalytic mechanism. Asp65 serves as a coordination point for Mg(2+). Residues Ser66, 144–147, Lys167, and 172–173 contribute to the substrate site; these read FGYD and HR.

Belongs to the HAM1 NTPase family. Homodimer. It depends on Mg(2+) as a cofactor.

The catalysed reaction is XTP + H2O = XMP + diphosphate + H(+). The enzyme catalyses dITP + H2O = dIMP + diphosphate + H(+). It catalyses the reaction ITP + H2O = IMP + diphosphate + H(+). Its function is as follows. Pyrophosphatase that catalyzes the hydrolysis of nucleoside triphosphates to their monophosphate derivatives, with a high preference for the non-canonical purine nucleotides XTP (xanthosine triphosphate), dITP (deoxyinosine triphosphate) and ITP. Seems to function as a house-cleaning enzyme that removes non-canonical purine nucleotides from the nucleotide pool, thus preventing their incorporation into DNA/RNA and avoiding chromosomal lesions. This Tropheryma whipplei (strain Twist) (Whipple's bacillus) protein is dITP/XTP pyrophosphatase.